The chain runs to 350 residues: Ribosomal RNA large subunit methyltransferase M (350 aa).

S-adenosyl-L-methionine-binding positions include 217 to 220, aspartate 236, aspartate 256, and aspartate 272; that span reads APGG. The active-site Proton acceptor is lysine 301.

Belongs to the class I-like SAM-binding methyltransferase superfamily. RNA methyltransferase RlmE family. RlmM subfamily. As to quaternary structure, monomer.

It is found in the cytoplasm. The catalysed reaction is cytidine(2498) in 23S rRNA + S-adenosyl-L-methionine = 2'-O-methylcytidine(2498) in 23S rRNA + S-adenosyl-L-homocysteine + H(+). Functionally, catalyzes the 2'-O-methylation at nucleotide C2498 in 23S rRNA. The sequence is that of Ribosomal RNA large subunit methyltransferase M from Cellvibrio japonicus (strain Ueda107) (Pseudomonas fluorescens subsp. cellulosa).